The chain runs to 543 residues: Glucose-6-phosphate isomerase (543 aa).

Catalysis depends on Glu-353, which acts as the Proton donor. Active-site residues include His-384 and Lys-512.

It belongs to the GPI family.

It localises to the cytoplasm. The catalysed reaction is alpha-D-glucose 6-phosphate = beta-D-fructose 6-phosphate. It functions in the pathway carbohydrate biosynthesis; gluconeogenesis. The protein operates within carbohydrate degradation; glycolysis; D-glyceraldehyde 3-phosphate and glycerone phosphate from D-glucose: step 2/4. Functionally, catalyzes the reversible isomerization of glucose-6-phosphate to fructose-6-phosphate. This Christiangramia forsetii (strain DSM 17595 / CGMCC 1.15422 / KT0803) (Gramella forsetii) protein is Glucose-6-phosphate isomerase.